The sequence spans 206 residues: Inactive ribonuclease-like protein 9 (206 aa).

A signal peptide spans 1-26 (MMRTLITTHSLLLFLLLLQLLQPLQF). Cystine bridges form between Cys99–Cys154, Cys117–Cys169, and Cys124–Cys131. Asn132 carries an N-linked (GlcNAc...) asparagine glycan.

It belongs to the pancreatic ribonuclease family.

It localises to the secreted. In terms of biological role, does not exhibit any ribonuclease activity. This chain is Inactive ribonuclease-like protein 9 (RNASE9), found in Saimiri boliviensis boliviensis (Bolivian squirrel monkey).